A 337-amino-acid polypeptide reads, in one-letter code: D-alanine--D-alanine ligase (337 aa).

Residues 124–330 form the ATP-grasp domain; it reads KMWFSALGIP…FTEYLSLVIN (207 aa). 154–209 contributes to the ATP binding site; that stretch reads ALAQWGSIFVKAASQGSSVGCYKVDDSAKVAGVLKDAFGYAPYVIVEKTIKARELE. Mg(2+) contacts are provided by Asp-284, Glu-297, and Asn-299.

The protein belongs to the D-alanine--D-alanine ligase family. It depends on Mg(2+) as a cofactor. Mn(2+) serves as cofactor.

Its subcellular location is the cytoplasm. It catalyses the reaction 2 D-alanine + ATP = D-alanyl-D-alanine + ADP + phosphate + H(+). The protein operates within cell wall biogenesis; peptidoglycan biosynthesis. Functionally, cell wall formation. The sequence is that of D-alanine--D-alanine ligase from Shewanella baltica (strain OS223).